Reading from the N-terminus, the 312-residue chain is MPASHEASNYDEVSMQQSMLFSDGLQDLKNLRAQLYSAAEYFELSYTTDDKKQIVVETLKDYAVKALVNTVDHLGSVTYKVNDFIDEKVDEVSETELRVSCIEQRLRMCQEYMDHEGRSQQSLVIDTPKFHKRYILPAGEIMTATNLEKLKYFGSSLEDADDWNQFRNAVRATIRETPPPPVRKSTSQSSSPRQPPQRSATFSFTSTIPKKEQDKRSVSPHRFPLLRSGSVATRKSASISRPTTPSKSRSITPIRYPSEPRRSASVRVAFEKDNQKETEQQQPSKSKRLLKALLSRRKTKKDDTLYTFLDEY.

The tract at residues 173–287 (TIRETPPPPV…TEQQQPSKSK (115 aa)) is disordered. Residues 183–199 (RKSTSQSSSPRQPPQRS) show a composition bias toward low complexity. The span at 230–251 (SVATRKSASISRPTTPSKSRSI) shows a compositional bias: polar residues. Over residues 269-279 (AFEKDNQKETE) the composition is skewed to basic and acidic residues.

This sequence belongs to the ABI family. Binds SCAR.

It localises to the cytoplasm. The protein resides in the cytoskeleton. In terms of biological role, involved in regulation of actin and microtubule organization. Part of a WAVE complex that activates the Arp2/3 complex. The sequence is that of Protein ABIL2 (ABIL2) from Arabidopsis thaliana (Mouse-ear cress).